The chain runs to 337 residues: Tert-butanol monooxygenase / tert-amyl alcohol desaturase reductase subunit (337 aa).

Positions 9–114 (KYPKTALNLR…GHPRNNFPLI (106 aa)) constitute an FAD-binding FR-type domain. The 84-residue stretch at 254-337 (FQIKIASTGT…SKGATLVLDL (84 aa)) folds into the 2Fe-2S ferredoxin-type domain. [2Fe-2S] cluster contacts are provided by Cys288, Cys293, Cys296, and Cys324.

This sequence belongs to the PDR/VanB family. This two-component enzyme is composed of an oxygenase (MdpJ) and a reductase (MdpK). The cofactor is [2Fe-2S] cluster.

Its function is as follows. Reductase component of a two-component system involved in the degradation of tertiary alcohols such as tert-butyl alcohol (TBA) and tert-amyl alcohol (TAA). MdpK probably provides electrons via its [2Fe-2S] iron-sulfur cluster to the MdpJ oxygenase subunit. The chain is Tert-butanol monooxygenase / tert-amyl alcohol desaturase reductase subunit from Aquincola tertiaricarbonis.